The chain runs to 639 residues: UvrABC system protein C (639 aa).

Residues 20–97 (ERSGVYRMFD…IKKFQPKFNI (78 aa)) form the GIY-YIG domain. The UVR domain occupies 207–242 (KELQENLSRKMEELSSQMRFEEAAEIRDRIKALSYV).

The protein belongs to the UvrC family. In terms of assembly, interacts with UvrB in an incision complex.

It is found in the cytoplasm. In terms of biological role, the UvrABC repair system catalyzes the recognition and processing of DNA lesions. UvrC both incises the 5' and 3' sides of the lesion. The N-terminal half is responsible for the 3' incision and the C-terminal half is responsible for the 5' incision. The sequence is that of UvrABC system protein C from Rickettsia rickettsii (strain Iowa).